Here is a 442-residue protein sequence, read N- to C-terminus: MTRADFIQFGAMIHGVGGTTDGWRHPDVDPSASTNIEFYMKKAQTAEKGLFSFIFIADGLFISEKSIPHFLNRFEPITILSALASVTKNIGLVGTFSTSFTEPFTISRQLMSLDHISGGRAGWNLVTSPQEGAARNHSKSNLPEHTERYEIAQEHLDVVRGLWNSWEHDAFIHNKKTGQFFDQAKLHRLNHKGKYFQVEGPLNIGRSKQGEPVVFQAGSSETGRQFAAKNADAIFTHSNSLEETKAFYADVKSRAADEGRDPSSVRIFPGISPIVADTEEEAEKKYREFAELIPIENAVTYLARFFDDYDLSVYPLDEPFPDIGDVGKNAFQSTTDRIKREAKARNLTLREVAQEMAFPRTLFIGTPERVASLIETWFNAEAADGFIVGSDIPGTLDAFVEKVIPILQERGLYRQDYRGGTLRENLGLGIPQHQSVLHSSHH.

D58, T95, H145, Y149, S219, and S220 together coordinate FMN.

Belongs to the NtaA/SnaA/DszA monooxygenase family. In terms of assembly, homodimer.

The enzyme catalyses (R)-N-acetyl-S-benzyl-L-cysteine sulfoxide + FMNH2 + O2 = N-acetyl-S-hydroxy-L-cysteine + benzaldehyde + FMN + H2O + H(+). The protein operates within amino-acid metabolism. In terms of biological role, involved in a cysteine salvage pathway from S-alkylcysteine. Catalyzes the C-S bond cleavage in N-acetyl-S-benzyl-L-cysteine sulfoxide leading to N-acetyl-S-hydroxy-L-cysteine and benzaldehyde. This pathway is likely important in the catabolism of alkylated cysteine generated by proteolysis of alkylated glutathione formed in the detoxification of a wide range of electrophiles. Has much less efficient activity with N-acetyl-S-methyl-L-cysteine sulfoxide as substrate. Cannot use S-alkylated L-cysteine sulfones and ketone analogs as substrates, demonstrating that the sulfoxide is required for activity. The chain is N-acetyl-S-alkylcysteine sulfoxide monooxygenase from Bacillus subtilis (strain 168).